Consider the following 120-residue polypeptide: MANPTQIYSRDSKWRRGVMRSLVSELLLHGRIQTTLTRAKEVRGHAEKLITKAKAQSLASRRHAASFLRPLVTKDNKTLLQELFDTIAPKYKDRPGGYTRIYKLPKRDGDSTRMALIELV.

It belongs to the bacterial ribosomal protein bL17 family. In terms of assembly, part of the 50S ribosomal subunit. Contacts protein L32.

The polypeptide is Large ribosomal subunit protein bL17 (Mycoplasmopsis synoviae (strain 53) (Mycoplasma synoviae)).